A 181-amino-acid chain; its full sequence is Alkyl hydroperoxide reductase AhpD (181 aa).

The active-site Proton donor is cysteine 131. Residues cysteine 131 and cysteine 134 are joined by a disulfide bond. Catalysis depends on cysteine 134, which acts as the Cysteine sulfenic acid (-SOH) intermediate.

This sequence belongs to the AhpD family.

It carries out the reaction N(6)-[(R)-dihydrolipoyl]-L-lysyl-[lipoyl-carrier protein] + a hydroperoxide = N(6)-[(R)-lipoyl]-L-lysyl-[lipoyl-carrier protein] + an alcohol + H2O. Antioxidant protein with alkyl hydroperoxidase activity. Required for the reduction of the AhpC active site cysteine residues and for the regeneration of the AhpC enzyme activity. This chain is Alkyl hydroperoxide reductase AhpD, found in Rhodopseudomonas palustris (strain BisA53).